The chain runs to 435 residues: GTPase Der (435 aa).

EngA-type G domains are found at residues Pro-4–Asp-167 and Ile-175–Asn-350. GTP is bound by residues Gly-10–Ser-17, Asp-57–Ile-61, Asn-119–Asp-122, Gly-181–Ser-188, Asp-228–Ile-232, and Asn-293–Asp-296. A KH-like domain is found at Lys-351–Lys-435.

Belongs to the TRAFAC class TrmE-Era-EngA-EngB-Septin-like GTPase superfamily. EngA (Der) GTPase family. In terms of assembly, associates with the 50S ribosomal subunit.

In terms of biological role, GTPase that plays an essential role in the late steps of ribosome biogenesis. This Levilactobacillus brevis (strain ATCC 367 / BCRC 12310 / CIP 105137 / JCM 1170 / LMG 11437 / NCIMB 947 / NCTC 947) (Lactobacillus brevis) protein is GTPase Der.